Reading from the N-terminus, the 179-residue chain is Large ribosomal subunit protein uL6 (179 aa).

This sequence belongs to the universal ribosomal protein uL6 family. As to quaternary structure, part of the 50S ribosomal subunit.

Its function is as follows. This protein binds to the 23S rRNA, and is important in its secondary structure. It is located near the subunit interface in the base of the L7/L12 stalk, and near the tRNA binding site of the peptidyltransferase center. The polypeptide is Large ribosomal subunit protein uL6 (Streptomyces avermitilis (strain ATCC 31267 / DSM 46492 / JCM 5070 / NBRC 14893 / NCIMB 12804 / NRRL 8165 / MA-4680)).